The chain runs to 126 residues: Holo-[acyl-carrier-protein] synthase (126 aa).

The Mg(2+) site is built by D9 and E58.

The protein belongs to the P-Pant transferase superfamily. AcpS family. Mg(2+) is required as a cofactor.

The protein localises to the cytoplasm. It catalyses the reaction apo-[ACP] + CoA = holo-[ACP] + adenosine 3',5'-bisphosphate + H(+). Functionally, transfers the 4'-phosphopantetheine moiety from coenzyme A to a Ser of acyl-carrier-protein. This chain is Holo-[acyl-carrier-protein] synthase, found in Vibrio campbellii (strain ATCC BAA-1116).